Here is a 263-residue protein sequence, read N- to C-terminus: Small ribosomal subunit protein uS2 (263 aa).

A disordered region spans residues 228–263 (QLEEPEADLADEDDNGMTTSDDGDAEALDIPDDSDA). A compositionally biased stretch (acidic residues) spans 230 to 263 (EEPEADLADEDDNGMTTSDDGDAEALDIPDDSDA).

Belongs to the universal ribosomal protein uS2 family.

In Thermosynechococcus vestitus (strain NIES-2133 / IAM M-273 / BP-1), this protein is Small ribosomal subunit protein uS2.